A 304-amino-acid polypeptide reads, in one-letter code: Non-specific ribonucleoside hydrolase RihC (304 aa).

His-233 is an active-site residue.

This sequence belongs to the IUNH family. RihC subfamily.

Functionally, hydrolyzes both purine and pyrimidine ribonucleosides with a broad-substrate specificity. The chain is Non-specific ribonucleoside hydrolase RihC from Escherichia coli O157:H7.